A 76-amino-acid chain; its full sequence is Alpha/kappa-conotoxin-like pl14.3 (76 aa).

A signal peptide spans 1–27 (MPSVRSVACCCLLWMMLSVQLVTPGSP). Residues 28-39 (ATAQLSGQRTAR) constitute a propeptide that is removed on maturation. Intrachain disulfides connect Cys-46/Cys-61 and Cys-50/Cys-63. Aspartic acid 1-amide is present on Asp-64. Residues 65 to 76 (GKRDVVSSSMAV) constitute a propeptide that is removed on maturation.

The protein belongs to the conotoxin J superfamily. Expressed by the venom duct.

Its subcellular location is the secreted. Its function is as follows. Highly inhibits both nicotinic acetylcholine receptors (neuronal (alpha-3/beta-4) and muscular (alpha-1/beta-1/epsilon/delta) subtypes) and the voltage-gated potassium channel Kv1.6/KCNA6 subtype. The protein is Alpha/kappa-conotoxin-like pl14.3 of Conus planorbis (Planorbis cone).